The following is a 129-amino-acid chain: UPF0102 protein Cpar_0015 (129 aa).

This sequence belongs to the UPF0102 family.

The polypeptide is UPF0102 protein Cpar_0015 (Chlorobaculum parvum (strain DSM 263 / NCIMB 8327) (Chlorobium vibrioforme subsp. thiosulfatophilum)).